The chain runs to 116 residues: SGSCSLKTCWLQLADFRKVGNALKEKYDSATAMKLNGRGKLVQVNSRFNTPTTLDLVYVDQSPDYCVRNESTGSLGTQGRLCNKTSEGMDGCALMCCGRGYDQFKTVRTERCHCKF.

A lipid anchor (O-palmitoleoyl serine; by PORCN) is attached at serine 1. Residues asparagine 69 and asparagine 83 are each glycosylated (N-linked (GlcNAc...) asparagine). Cysteines 82 and 97 form a disulfide.

Belongs to the Wnt family. Palmitoleoylation is required for efficient binding to frizzled receptors. Depalmitoleoylation leads to Wnt signaling pathway inhibition.

The protein localises to the secreted. It localises to the extracellular space. The protein resides in the extracellular matrix. Functionally, ligand for members of the frizzled family of seven transmembrane receptors. Can activate or inhibit canonical Wnt signaling, depending on receptor context. Required during embryogenesis for extension of the primary anterior-posterior axis. The polypeptide is Protein Wnt-5a (WNT-5A) (Alopias vulpinus (Common thresher shark)).